The chain runs to 315 residues: DNA-directed RNA polymerase subunit alpha (315 aa).

An alpha N-terminal domain (alpha-NTD) region spans residues 1 to 228; sequence MLEIEKPIIE…EHFKLFMSLT (228 aa). An alpha C-terminal domain (alpha-CTD) region spans residues 245 to 315; the sequence is KEKVLEMTVE…LGLALKLTEE (71 aa).

The protein belongs to the RNA polymerase alpha chain family. Homodimer. The RNAP catalytic core consists of 2 alpha, 1 beta, 1 beta' and 1 omega subunit. When a sigma factor is associated with the core the holoenzyme is formed, which can initiate transcription.

The catalysed reaction is RNA(n) + a ribonucleoside 5'-triphosphate = RNA(n+1) + diphosphate. In terms of biological role, DNA-dependent RNA polymerase catalyzes the transcription of DNA into RNA using the four ribonucleoside triphosphates as substrates. This is DNA-directed RNA polymerase subunit alpha from Clostridium beijerinckii (strain ATCC 51743 / NCIMB 8052) (Clostridium acetobutylicum).